The sequence spans 318 residues: CRISPR-associated endonuclease Cas1 1 (318 aa).

Mn(2+)-binding residues include E160, H225, and E240.

This sequence belongs to the CRISPR-associated endonuclease Cas1 family. In terms of assembly, homodimer, forms a heterotetramer with a Cas2 homodimer. The cofactor is Mg(2+). Mn(2+) serves as cofactor.

CRISPR (clustered regularly interspaced short palindromic repeat), is an adaptive immune system that provides protection against mobile genetic elements (viruses, transposable elements and conjugative plasmids). CRISPR clusters contain spacers, sequences complementary to antecedent mobile elements, and target invading nucleic acids. CRISPR clusters are transcribed and processed into CRISPR RNA (crRNA). Acts as a dsDNA endonuclease. Involved in the integration of spacer DNA into the CRISPR cassette. This chain is CRISPR-associated endonuclease Cas1 1, found in Thermodesulfovibrio yellowstonii (strain ATCC 51303 / DSM 11347 / YP87).